We begin with the raw amino-acid sequence, 301 residues long: Ribonuclease Z (301 aa).

Zn(2+) is bound by residues His61, His63, Asp65, His66, His140, Asp211, and His269. Asp65 serves as the catalytic Proton acceptor.

Belongs to the RNase Z family. In terms of assembly, homodimer. Requires Zn(2+) as cofactor.

It catalyses the reaction Endonucleolytic cleavage of RNA, removing extra 3' nucleotides from tRNA precursor, generating 3' termini of tRNAs. A 3'-hydroxy group is left at the tRNA terminus and a 5'-phosphoryl group is left at the trailer molecule.. Zinc phosphodiesterase, which displays some tRNA 3'-processing endonuclease activity. Probably involved in tRNA maturation, by removing a 3'-trailer from precursor tRNA. The sequence is that of Ribonuclease Z from Bradyrhizobium sp. (strain ORS 278).